The sequence spans 487 residues: Cysteine--tRNA ligase (487 aa).

Residue C27 coordinates Zn(2+). Residues 29–39 (VTVYDLCHIGH) carry the 'HIGH' region motif. 3 residues coordinate Zn(2+): C211, H236, and E240. The short motif at 268 to 272 (KMSKS) is the 'KMSKS' region element. K271 contributes to the ATP binding site.

Belongs to the class-I aminoacyl-tRNA synthetase family. In terms of assembly, monomer. Zn(2+) serves as cofactor.

The protein resides in the cytoplasm. The catalysed reaction is tRNA(Cys) + L-cysteine + ATP = L-cysteinyl-tRNA(Cys) + AMP + diphosphate. The chain is Cysteine--tRNA ligase from Thermodesulfovibrio yellowstonii (strain ATCC 51303 / DSM 11347 / YP87).